We begin with the raw amino-acid sequence, 1001 residues long: MIKSLNERDNFLNRLREMEHKREKDEKQEKAARKVQKFWRGHRVQHNQRLLFRAEFDAVSDRQRGLEETIKMAQLLVNFYETNKDEERLVMTLSELVKLKTSDKEFEKRIRETQRLLLARCCIKFLKNATENTIFFHIFRYLEDYVTCHSKLFEASSKLGLFNAEFHLLEALIGKPTGKTVERASLNPRILQLLTRIFETFVNPSRSTSVSVNVANRLLKTICVNITDLNFSNYILYYIKDHIKPTSPNFTNLFEAMKSVDILNNWKVRPEIAETASLRLQSIFVSQIVHVSNTQSEDVKQYFNSLAVFLEHHSKIMRSLNVKEDLSEFGRLRTSVNNHLKQYCEEMLISNEFRRAACIYANLPGVQVETIISLRKYFSQFLDLLAASNTFVEALYAFIARLCPNGEFDPIDAKSPKVNALELFCNCLNKRVSSVADSDFVPTDIFVDFDHTVEFLRDVSIKLIHLMFPTMARGDLYSGNLKEKMYKAETDWKDVTESVFSILGAIYQKDIRLKYFPEEFWTNHGREVLSGIGEHRRMPRRRMPNGRLQIERTMDTEFVERLAAIYEMDSDSENDDEDEDNNLPAVLRRAICVMKHIPFIVPFMDRVKLFTRLLNQDKEKHYTSTFGMGFNGPSVTVRRDQVYMDAFETFAPKMQGDKVNDLKSMVRVKMVNWAGMNESGIDGGGIFREFLSELLKTAFNVERGFFTFTESKLLYPNPTAPFLLGVDCLAHFQFIGRMIGKLIYERQLQEVRFAEFFIAQIFETDKNKDVDLQHMKSFDPIIFKHLKALQKMNNRELDELQLDFSVVTSDMGLVRNVNLKPNGSKFRVTVENVHEYVRLYVNYHLKQRIASMVDAVRKGISEIISIEWMRMFAPHELQIMIAGYEEVFTAKELRKFCELRFAAGTQDINYEEMFWDVIDKLSNDDKKALLKFVTGCSRAPVDGFKSIQPRMGVLVIPSSDDELPTSATCMNMLRIPKYSNRTKLEEKLRYAINSGAGFELA.

Positions 28–57 (QEKAARKVQKFWRGHRVQHNQRLLFRAEFD) constitute an IQ domain. Residues 66 to 115 (LEETIKMAQLLVNFYETNKDEERLVMTLSELVKLKTSDKEFEKRIRETQR) are a coiled coil. The HECT domain maps to 658–1001 (KVNDLKSMVR…INSGAGFELA (344 aa)). The active-site Glycyl thioester intermediate is Cys969.

As to quaternary structure, interacts with ify-1 and cyb-1.

The catalysed reaction is S-ubiquitinyl-[E2 ubiquitin-conjugating enzyme]-L-cysteine + [acceptor protein]-L-lysine = [E2 ubiquitin-conjugating enzyme]-L-cysteine + N(6)-ubiquitinyl-[acceptor protein]-L-lysine.. Its pathway is protein modification; protein ubiquitination. Its function is as follows. E3 ubiquitin-protein ligase that accepts ubiquitin from E2 ubiquitin-conjugating enzymes, such as ubc-18, in the form of a thioester and then directly transfers the ubiquitin to targeted substrates. Ubiquitinates ify-1 and cyb-1 targeting them for degradation in post-meiotic embryos. This chain is E3 ubiquitin-protein ligase etc-1, found in Caenorhabditis elegans.